The chain runs to 282 residues: Shikimate dehydrogenase (NADP(+)) (282 aa).

Residues 15–17 (SKS) and Thr62 each bind shikimate. The active-site Proton acceptor is the Lys66. Positions 87 and 103 each coordinate shikimate. NADP(+) is bound by residues 127 to 131 (GAGGA), 151 to 156 (NRTHTK), and Met220. Tyr222 lines the shikimate pocket. Gly244 is a binding site for NADP(+).

The protein belongs to the shikimate dehydrogenase family. In terms of assembly, homodimer.

It carries out the reaction shikimate + NADP(+) = 3-dehydroshikimate + NADPH + H(+). Its pathway is metabolic intermediate biosynthesis; chorismate biosynthesis; chorismate from D-erythrose 4-phosphate and phosphoenolpyruvate: step 4/7. Its function is as follows. Involved in the biosynthesis of the chorismate, which leads to the biosynthesis of aromatic amino acids. Catalyzes the reversible NADPH linked reduction of 3-dehydroshikimate (DHSA) to yield shikimate (SA). The sequence is that of Shikimate dehydrogenase (NADP(+)) from Shewanella baltica (strain OS155 / ATCC BAA-1091).